The chain runs to 208 residues: High frequency lysogenization protein HflD homolog (208 aa).

Residues 91–125 (LMVLERKLNANKQAMNQLGERLGQLERQLAHFDLE) are a coiled coil.

This sequence belongs to the HflD family.

It localises to the cytoplasm. Its subcellular location is the cell inner membrane. In Serratia proteamaculans (strain 568), this protein is High frequency lysogenization protein HflD homolog.